A 329-amino-acid chain; its full sequence is Diaminopimelate epimerase (329 aa).

Substrate is bound by residues N14 and N73. Residue C82 is the Proton donor of the active site. Residues 83 to 84, N170, N206, and 224 to 225 contribute to the substrate site; these read GN and ER. C233 functions as the Proton acceptor in the catalytic mechanism. 234–235 contacts substrate; that stretch reads GT.

Belongs to the diaminopimelate epimerase family. Homodimer.

Its subcellular location is the cytoplasm. The enzyme catalyses (2S,6S)-2,6-diaminopimelate = meso-2,6-diaminopimelate. It functions in the pathway amino-acid biosynthesis; L-lysine biosynthesis via DAP pathway; DL-2,6-diaminopimelate from LL-2,6-diaminopimelate: step 1/1. Its function is as follows. Catalyzes the stereoinversion of LL-2,6-diaminopimelate (L,L-DAP) to meso-diaminopimelate (meso-DAP), a precursor of L-lysine and an essential component of the bacterial peptidoglycan. In Listeria innocua serovar 6a (strain ATCC BAA-680 / CLIP 11262), this protein is Diaminopimelate epimerase.